We begin with the raw amino-acid sequence, 315 residues long: Putative purine nucleoside phosphorylase (315 aa).

Phosphate is bound by residues serine 49, histidine 81, 103–105 (RYH), and alanine 135. Glutamate 220 provides a ligand contact to a purine D-ribonucleoside. Serine 239 serves as a coordination point for phosphate. A purine D-ribonucleoside is bound at residue asparagine 262.

This sequence belongs to the PNP/MTAP phosphorylase family.

It is found in the cytoplasm. The protein localises to the nucleus. It carries out the reaction a purine D-ribonucleoside + phosphate = a purine nucleobase + alpha-D-ribose 1-phosphate. The protein operates within purine metabolism; purine nucleoside salvage. In terms of biological role, the purine nucleoside phosphorylases catalyze the phosphorolytic breakdown of the N-glycosidic bond in the beta-(deoxy)ribonucleoside molecules, with the formation of the corresponding free purine bases and pentose-1-phosphate. Cleaves guanosine and inosine. The chain is Putative purine nucleoside phosphorylase from Schizosaccharomyces pombe (strain 972 / ATCC 24843) (Fission yeast).